Consider the following 177-residue polypeptide: Large ribosomal subunit protein uL6 (177 aa).

It belongs to the universal ribosomal protein uL6 family. In terms of assembly, part of the 50S ribosomal subunit.

This protein binds to the 23S rRNA, and is important in its secondary structure. It is located near the subunit interface in the base of the L7/L12 stalk, and near the tRNA binding site of the peptidyltransferase center. This Rhodospirillum rubrum (strain ATCC 11170 / ATH 1.1.1 / DSM 467 / LMG 4362 / NCIMB 8255 / S1) protein is Large ribosomal subunit protein uL6.